Here is a 491-residue protein sequence, read N- to C-terminus: Probable glycine dehydrogenase (decarboxylating) subunit 2 (491 aa).

K273 is modified (N6-(pyridoxal phosphate)lysine).

Belongs to the GcvP family. C-terminal subunit subfamily. As to quaternary structure, the glycine cleavage system is composed of four proteins: P, T, L and H. In this organism, the P 'protein' is a heterodimer of two subunits. Pyridoxal 5'-phosphate is required as a cofactor.

The enzyme catalyses N(6)-[(R)-lipoyl]-L-lysyl-[glycine-cleavage complex H protein] + glycine + H(+) = N(6)-[(R)-S(8)-aminomethyldihydrolipoyl]-L-lysyl-[glycine-cleavage complex H protein] + CO2. Functionally, the glycine cleavage system catalyzes the degradation of glycine. The P protein binds the alpha-amino group of glycine through its pyridoxal phosphate cofactor; CO(2) is released and the remaining methylamine moiety is then transferred to the lipoamide cofactor of the H protein. The polypeptide is Probable glycine dehydrogenase (decarboxylating) subunit 2 (Bacillus cytotoxicus (strain DSM 22905 / CIP 110041 / 391-98 / NVH 391-98)).